Here is a 603-residue protein sequence, read N- to C-terminus: Cdc42-interacting protein 4 (603 aa).

Residues 1 to 117 (MDWGTELWDQ…EMKQERKMHF (117 aa)) form a required for podosome formation and interaction with AKAP9 and microtubules region. The interval 1–117 (MDWGTELWDQ…EMKQERKMHF (117 aa)) is required for translocation to the plasma membrane in response to insulin. The 264-residue stretch at 1–264 (MDWGTELWDQ…AAESVDAKND (264 aa)) folds into the F-BAR domain. Residues 67-259 (FSQQQSFVQL…EGMKVAAESV (193 aa)) are a coiled coil. Residues 293–539 (RVPSDSSLGT…YTEFDEDFEE (247 aa)) form an interaction with CDC42 region. The segment at 293 to 603 (RVPSDSSLGT…PTSYLRVTLN (311 aa)) is interaction with PDE6G. The disordered stretch occupies residues 295–358 (PSDSSLGTPD…PSSPRSGRDP (64 aa)). 3 positions are modified to phosphoserine: S296, S298, and S299. A compositionally biased stretch (basic residues) spans 316 to 329 (SRAKRWPFGKKNKP). The segment covering 333–346 (SLSLLGGHLPSTLS) has biased composition (low complexity). S335 and S351 each carry phosphoserine. Residues 388–481 (TEDFSHLPPE…ESRVLSNRGD (94 aa)) adopt a coiled-coil conformation. The 78-residue stretch at 393–470 (HLPPEQQRKR…VQKYEAWLAE (78 aa)) folds into the REM-1 domain. The required for interaction with FASLG and localization to lysosomes stretch occupies residues 471-603 (AESRVLSNRG…PTSYLRVTLN (133 aa)). The tract at residues 477-541 (SNRGDSLSRH…EFDEDFEEPA (65 aa)) is disordered. At S482 the chain carries Phosphoserine. The interaction with DNM2 and WASL stretch occupies residues 487–543 (ARPPDPPTTAPPDSSSSSTNSGSQDNKESSSEEPPSEGQDTPIYTEFDEDFEEPASP). A compositionally biased stretch (low complexity) spans 497–510 (PPDSSSSSTNSGSQ). Positions 532–603 (EFDEDFEEPA…PTSYLRVTLN (72 aa)) are interaction with DNM1 and WASL. Residues 540 to 603 (PASPIGQCVA…PTSYLRVTLN (64 aa)) are required for podosome formation. The 62-residue stretch at 542-603 (SPIGQCVAIY…PTSYLRVTLN (62 aa)) folds into the SH3 domain. The segment at 546–603 (QCVAIYHFEGSSEGTVSMSEGEDLSLMEEDKGDGWTRVRRKQGAEGYVPTSYLRVTLN) is interaction with WAS. An interaction with ARHGAP17, DAAM1, DIAPH1 and DIAPH2 region spans residues 548-603 (VAIYHFEGSSEGTVSMSEGEDLSLMEEDKGDGWTRVRRKQGAEGYVPTSYLRVTLN).

It belongs to the FNBP1 family. Homodimerizes, the dimers can polymerize end-to-end to form filamentous structures. Interacts with AKAP9, ARHGAP17, DAAM1, DIAPH1, DIAPH2, DNM1, FASLG/FASL, GAPVD1, LYN, microtubules, PDE6G, SRC and WAS/WASP. Interacts with the ligand binding domain of the thyroid receptor (TR) in the presence of thyroid hormone. May interact with CTNNB1 and HD/HTT. Interacts specifically with GTP-bound CDC42 and RHOQ. Interacts with DNM2 and WASL. Tyrosine phosphorylated. Also phosphorylated by PKA.

Its subcellular location is the cytoplasm. It is found in the cytoskeleton. The protein resides in the cell cortex. The protein localises to the lysosome. It localises to the golgi apparatus. Its subcellular location is the cell membrane. It is found in the cell projection. The protein resides in the phagocytic cup. Its function is as follows. Required to coordinate membrane tubulation with reorganization of the actin cytoskeleton during endocytosis. Binds to lipids such as phosphatidylinositol 4,5-bisphosphate and phosphatidylserine and promotes membrane invagination and the formation of tubules. Also promotes CDC42-induced actin polymerization by recruiting WASL/N-WASP which in turn activates the Arp2/3 complex. Actin polymerization may promote the fission of membrane tubules to form endocytic vesicles. Required for the formation of podosomes, actin-rich adhesion structures specific to monocyte-derived cells. May be required for the lysosomal retention of FASLG/FASL. Required for translocation of GLUT4 to the plasma membrane in response to insulin signaling. This Mus musculus (Mouse) protein is Cdc42-interacting protein 4 (Trip10).